The chain runs to 430 residues: Serine--tRNA ligase (430 aa).

An L-serine-binding site is contributed by Thr237–Glu239. An ATP-binding site is contributed by Arg268 to Glu270. Residue Glu291 coordinates L-serine. Glu355–Ser358 provides a ligand contact to ATP. Residue Ser391 participates in L-serine binding.

Belongs to the class-II aminoacyl-tRNA synthetase family. Type-1 seryl-tRNA synthetase subfamily. As to quaternary structure, homodimer. The tRNA molecule binds across the dimer.

It localises to the cytoplasm. The catalysed reaction is tRNA(Ser) + L-serine + ATP = L-seryl-tRNA(Ser) + AMP + diphosphate + H(+). The enzyme catalyses tRNA(Sec) + L-serine + ATP = L-seryl-tRNA(Sec) + AMP + diphosphate + H(+). The protein operates within aminoacyl-tRNA biosynthesis; selenocysteinyl-tRNA(Sec) biosynthesis; L-seryl-tRNA(Sec) from L-serine and tRNA(Sec): step 1/1. Catalyzes the attachment of serine to tRNA(Ser). Is also able to aminoacylate tRNA(Sec) with serine, to form the misacylated tRNA L-seryl-tRNA(Sec), which will be further converted into selenocysteinyl-tRNA(Sec). In Shigella boydii serotype 18 (strain CDC 3083-94 / BS512), this protein is Serine--tRNA ligase.